We begin with the raw amino-acid sequence, 238 residues long: uncharacterized protein (238 aa).

This is an uncharacterized protein from Mycobacterium tuberculosis (strain ATCC 25618 / H37Rv).